The chain runs to 222 residues: Thiamine-phosphate synthase (222 aa).

4-amino-2-methyl-5-(diphosphooxymethyl)pyrimidine-binding positions include 44-48 and Asn-75; that span reads QVRMK. Mg(2+) is bound by residues Asp-76 and Asp-95. Thr-114 provides a ligand contact to 4-amino-2-methyl-5-(diphosphooxymethyl)pyrimidine. 140–142 serves as a coordination point for 2-[(2R,5Z)-2-carboxy-4-methylthiazol-5(2H)-ylidene]ethyl phosphate; the sequence is SRS. Lys-143 provides a ligand contact to 4-amino-2-methyl-5-(diphosphooxymethyl)pyrimidine. Gly-171 lines the 2-[(2R,5Z)-2-carboxy-4-methylthiazol-5(2H)-ylidene]ethyl phosphate pocket.

This sequence belongs to the thiamine-phosphate synthase family. It depends on Mg(2+) as a cofactor.

It carries out the reaction 2-[(2R,5Z)-2-carboxy-4-methylthiazol-5(2H)-ylidene]ethyl phosphate + 4-amino-2-methyl-5-(diphosphooxymethyl)pyrimidine + 2 H(+) = thiamine phosphate + CO2 + diphosphate. The catalysed reaction is 2-(2-carboxy-4-methylthiazol-5-yl)ethyl phosphate + 4-amino-2-methyl-5-(diphosphooxymethyl)pyrimidine + 2 H(+) = thiamine phosphate + CO2 + diphosphate. The enzyme catalyses 4-methyl-5-(2-phosphooxyethyl)-thiazole + 4-amino-2-methyl-5-(diphosphooxymethyl)pyrimidine + H(+) = thiamine phosphate + diphosphate. It functions in the pathway cofactor biosynthesis; thiamine diphosphate biosynthesis; thiamine phosphate from 4-amino-2-methyl-5-diphosphomethylpyrimidine and 4-methyl-5-(2-phosphoethyl)-thiazole: step 1/1. Condenses 4-methyl-5-(beta-hydroxyethyl)thiazole monophosphate (THZ-P) and 2-methyl-4-amino-5-hydroxymethyl pyrimidine pyrophosphate (HMP-PP) to form thiamine monophosphate (TMP). This chain is Thiamine-phosphate synthase, found in Anaeromyxobacter dehalogenans (strain 2CP-C).